We begin with the raw amino-acid sequence, 161 residues long: Anther-specific protein LAT52 (161 aa).

Residues 1 to 17 (MAKAIVLLSALCILALA) form the signal peptide. Intrachain disulfides connect Cys-35–Cys-106, Cys-38–Cys-147, and Cys-59–Cys-94. N-linked (GlcNAc...) asparagine glycosylation is present at Asn-61.

Belongs to the Ole e I family. As to expression, expressed in anthers and pollen.

Functionally, may play a role during germination or early tube growth. The polypeptide is Anther-specific protein LAT52 (LAT52) (Solanum lycopersicum (Tomato)).